Consider the following 329-residue polypeptide: uncharacterized protein (329 aa).

2 coiled-coil regions span residues 57 to 120 (KKEE…QEVT) and 225 to 251 (QRQR…GNMM).

This is an uncharacterized protein from Homo sapiens (Human).